The primary structure comprises 461 residues: Early growth response factor homolog 1 (461 aa).

Disordered stretches follow at residues 1–25, 96–152, and 232–308; these read MALHEPPSKLNRHSHSNLLKPPSLN, TLMP…ELTL, and DVLH…YSSL. Composition is skewed to polar residues over residues 96-105, 129-144, 249-265, and 272-291; these read TLMPAPSSSY, GSNSFGVPRMTNGNSK, LGSSLQNEHPQSNSRPS, and QRTNTSASLTRSMDHSSMSP. Residues 299–308 show a composition bias toward low complexity; that stretch reads YSNSASYSSL. 3 consecutive C2H2-type zinc fingers follow at residues 374-398, 404-426, and 432-454; these read YKCPRDGCDRRFSRSDELTRHIRIH, FQCRICMRAFSRSDHLTTHVRTH, and FSCDICGRKFARSDERKRHTKVH.

It belongs to the EGR C2H2-type zinc-finger protein family. Expressed in sheath cells and distal tip cells of the somatic gonad, as well as in the intestine and sperm (at protein level). Expression not observed in oocytes (at protein level).

It localises to the nucleus. Its subcellular location is the cytoplasm. The protein resides in the perinuclear region. In terms of biological role, sequence-specific DNA-binding transcription factor. Plays a role in oocyte development, acting cell-autonomously in the somatic gonad. Involved in negative regulation of oocyte MAPK activation and inhibits oocyte maturation and ovulation. The chain is Early growth response factor homolog 1 from Caenorhabditis elegans.